We begin with the raw amino-acid sequence, 334 residues long: Protein-methionine-sulfoxide reductase catalytic subunit MsrP (334 aa).

The tat-type signal signal peptide spans 1 to 44 (MKKNQFLKESDVTAESVFFMKRRQVLKALGISAAALSLPHAAHA). Mo-molybdopterin contacts are provided by residues asparagine 88, 91 to 92 (YE), cysteine 146, threonine 181, asparagine 233, arginine 238, and 249 to 251 (GIK).

Belongs to the MsrP family. In terms of assembly, heterodimer of a catalytic subunit (MsrP) and a heme-binding subunit (MsrQ). Requires Mo-molybdopterin as cofactor. In terms of processing, predicted to be exported by the Tat system. The position of the signal peptide cleavage has not been experimentally proven.

It is found in the periplasm. The catalysed reaction is L-methionyl-[protein] + a quinone + H2O = L-methionyl-(S)-S-oxide-[protein] + a quinol. The enzyme catalyses L-methionyl-[protein] + a quinone + H2O = L-methionyl-(R)-S-oxide-[protein] + a quinol. Its function is as follows. Part of the MsrPQ system that repairs oxidized periplasmic proteins containing methionine sulfoxide residues (Met-O), using respiratory chain electrons. Thus protects these proteins from oxidative-stress damage caused by reactive species of oxygen and chlorine generated by the host defense mechanisms. MsrPQ is essential for the maintenance of envelope integrity under bleach stress, rescuing a wide series of structurally unrelated periplasmic proteins from methionine oxidation, including the primary periplasmic chaperone SurA and the lipoprotein Pal. The catalytic subunit MsrP is non-stereospecific, being able to reduce both (R-) and (S-) diastereoisomers of methionine sulfoxide. The chain is Protein-methionine-sulfoxide reductase catalytic subunit MsrP from Shigella sonnei (strain Ss046).